A 219-amino-acid polypeptide reads, in one-letter code: Octanoyltransferase (219 aa).

In terms of domain architecture, BPL/LPL catalytic spans 32–207; the sequence is SSSPDQLWIV…TFSHNLGYQN (176 aa). Substrate-binding positions include 71–78, 138–140, and 151–153; these read RGGQVTYH, SLG, and GLA. Cys-169 (acyl-thioester intermediate) is an active-site residue.

Belongs to the LipB family.

The protein resides in the cytoplasm. The catalysed reaction is octanoyl-[ACP] + L-lysyl-[protein] = N(6)-octanoyl-L-lysyl-[protein] + holo-[ACP] + H(+). It participates in protein modification; protein lipoylation via endogenous pathway; protein N(6)-(lipoyl)lysine from octanoyl-[acyl-carrier-protein]: step 1/2. Its function is as follows. Catalyzes the transfer of endogenously produced octanoic acid from octanoyl-acyl-carrier-protein onto the lipoyl domains of lipoate-dependent enzymes. Lipoyl-ACP can also act as a substrate although octanoyl-ACP is likely to be the physiological substrate. The protein is Octanoyltransferase of Shewanella woodyi (strain ATCC 51908 / MS32).